The chain runs to 209 residues: Imidazoleglycerol-phosphate dehydratase (209 aa).

Belongs to the imidazoleglycerol-phosphate dehydratase family.

The protein localises to the cytoplasm. The catalysed reaction is D-erythro-1-(imidazol-4-yl)glycerol 3-phosphate = 3-(imidazol-4-yl)-2-oxopropyl phosphate + H2O. It functions in the pathway amino-acid biosynthesis; L-histidine biosynthesis; L-histidine from 5-phospho-alpha-D-ribose 1-diphosphate: step 6/9. The sequence is that of Imidazoleglycerol-phosphate dehydratase from Paracidovorax citrulli (strain AAC00-1) (Acidovorax citrulli).